The sequence spans 456 residues: Dolichyl-diphosphooligosaccharide--protein glycosyltransferase 48 kDa subunit (456 aa).

An N-terminal signal peptide occupies residues 1–42 (MGYFRCARAGSFGRRRKMEPSTAARAWALFWLLLPLLGAVCA). Residues 43-427 (SGPRTLVLLD…YERFIPSAYP (385 aa)) lie on the Lumenal side of the membrane. The helical transmembrane segment at 428–447 (YYASAFSMMLGLFIFSIVFL) threads the bilayer. Over 448 to 456 (HMKEKEKSD) the chain is Cytoplasmic.

It belongs to the DDOST 48 kDa subunit family. As to quaternary structure, component of the oligosaccharyltransferase (OST) complex. OST exists in two different complex forms which contain common core subunits RPN1, RPN2, OST48, OST4, DAD1 and TMEM258, either STT3A or STT3B as catalytic subunits, and form-specific accessory subunits. STT3A complex assembly occurs through the formation of 3 subcomplexes. Subcomplex 1 contains RPN1 and TMEM258, subcomplex 2 contains the STT3A-specific subunits STT3A, DC2/OSTC, and KCP2 as well as the core subunit OST4, and subcomplex 3 contains RPN2, DAD1, and OST48. The STT3A complex can form stable complexes with the Sec61 complex or with both the Sec61 and TRAP complexes. Interacts with SMIM22.

It localises to the endoplasmic reticulum membrane. It functions in the pathway protein modification; protein glycosylation. In terms of biological role, subunit of the oligosaccharyl transferase (OST) complex that catalyzes the initial transfer of a defined glycan (Glc(3)Man(9)GlcNAc(2) in eukaryotes) from the lipid carrier dolichol-pyrophosphate to an asparagine residue within an Asn-X-Ser/Thr consensus motif in nascent polypeptide chains, the first step in protein N-glycosylation. N-glycosylation occurs cotranslationally and the complex associates with the Sec61 complex at the channel-forming translocon complex that mediates protein translocation across the endoplasmic reticulum (ER). All subunits are required for a maximal enzyme activity. Required for the assembly of both SST3A- and SS3B-containing OST complexes. The polypeptide is Dolichyl-diphosphooligosaccharide--protein glycosyltransferase 48 kDa subunit (Homo sapiens (Human)).